Consider the following 148-residue polypeptide: Large-conductance mechanosensitive channel (148 aa).

2 helical membrane passes run Val-16 to Ile-36 and Gly-89 to Val-109.

It belongs to the MscL family. In terms of assembly, homopentamer.

The protein localises to the cell inner membrane. Functionally, channel that opens in response to stretch forces in the membrane lipid bilayer. May participate in the regulation of osmotic pressure changes within the cell. This Paraburkholderia xenovorans (strain LB400) protein is Large-conductance mechanosensitive channel.